The primary structure comprises 236 residues: UPF0257 lipoprotein YnfC (236 aa).

The signal sequence occupies residues 1–16; the sequence is MKKPLLLTLLCMILAG. C17 carries the N-palmitoyl cysteine lipid modification. C17 carries the S-diacylglycerol cysteine lipid modification.

This sequence belongs to the UPF0257 family.

Its subcellular location is the cell membrane. This Salmonella paratyphi C (strain RKS4594) protein is UPF0257 lipoprotein YnfC.